Consider the following 1138-residue polypeptide: BMP-2-inducible protein kinase (1138 aa).

At S13 the chain carries Phosphoserine. The region spanning 48–313 (VTLEESLAEG…DIFQVSYFAF (266 aa)) is the Protein kinase domain. Residues 54-62 (LAEGGFSTV) and K76 contribute to the ATP site. The Proton acceptor role is filled by D177. Disordered regions lie at residues 355–435 (TDTI…RVLQ), 638–831 (NRLG…PADA), and 906–1018 (PRSV…EFLT). Residues 358–390 (IGPTETSIAPRQRPKANSTAATSSVLTIQSSAT) are compositionally biased toward polar residues. A compositionally biased stretch (low complexity) spans 417–435 (VLMVQGPPQQPPQQHRVLQ). Phosphoserine is present on S676. Over residues 684-701 (HSPNQKSITANLTKNGGS) the composition is skewed to polar residues. A compositionally biased stretch (basic and acidic residues) spans 706 to 715 (KDQRAGKKTS). Phosphoserine is present on residues S733, S806, and S807. A compositionally biased stretch (basic and acidic residues) spans 787–813 (DKHSSDSECEQAKTKRGDTSSLRRDKP). T819 is modified (phosphothreonine). S908 is subject to Phosphoserine. Polar residues predominate over residues 915–926 (TPFQPFSVSASK). Residues 951 to 965 (VKQRSLQKLSSRQRR) are compositionally biased toward basic residues. Residues S1010, S1012, S1013, S1020, S1022, S1087, and S1091 each carry the phosphoserine modification. The disordered stretch occupies residues 1117-1138 (TPQQSQPVELDPFGAAPFPSKQ).

This sequence belongs to the protein kinase superfamily. Ser/Thr protein kinase family. Autophosphorylated. In terms of tissue distribution, expressed in osteocytes and osteoblasts.

The protein resides in the nucleus. It catalyses the reaction L-seryl-[protein] + ATP = O-phospho-L-seryl-[protein] + ADP + H(+). It carries out the reaction L-threonyl-[protein] + ATP = O-phospho-L-threonyl-[protein] + ADP + H(+). In terms of biological role, may be involved in osteoblast differentiation. This chain is BMP-2-inducible protein kinase (Bmp2k), found in Mus musculus (Mouse).